Consider the following 225-residue polypeptide: ATP-dependent dethiobiotin synthetase BioD (225 aa).

12–17 (GVGKTV) contributes to the ATP binding site. T16 serves as a coordination point for Mg(2+). K37 is an active-site residue. T41 lines the substrate pocket. ATP-binding positions include D46, 105 to 108 (EGAG), 166 to 167 (GS), and 196 to 198 (PEG). Mg(2+)-binding residues include D46 and E105.

This sequence belongs to the dethiobiotin synthetase family. As to quaternary structure, homodimer. Mg(2+) serves as cofactor.

It is found in the cytoplasm. It catalyses the reaction (7R,8S)-7,8-diammoniononanoate + CO2 + ATP = (4R,5S)-dethiobiotin + ADP + phosphate + 3 H(+). The protein operates within cofactor biosynthesis; biotin biosynthesis; biotin from 7,8-diaminononanoate: step 1/2. In terms of biological role, catalyzes a mechanistically unusual reaction, the ATP-dependent insertion of CO2 between the N7 and N8 nitrogen atoms of 7,8-diaminopelargonic acid (DAPA, also called 7,8-diammoniononanoate) to form a ureido ring. The chain is ATP-dependent dethiobiotin synthetase BioD from Mycobacteroides abscessus (strain ATCC 19977 / DSM 44196 / CCUG 20993 / CIP 104536 / JCM 13569 / NCTC 13031 / TMC 1543 / L948) (Mycobacterium abscessus).